The primary structure comprises 122 residues: uncharacterized protein (122 aa).

Residues 79-114 (VIEDVASAIKEMMESAAKDLDKIEEVIKESLEKYLR) are a coiled coil.

This is an uncharacterized protein from Archaeoglobus fulgidus (strain ATCC 49558 / DSM 4304 / JCM 9628 / NBRC 100126 / VC-16).